The sequence spans 63 residues: Large ribosomal subunit protein uL30 (63 aa).

It belongs to the universal ribosomal protein uL30 family. As to quaternary structure, part of the 50S ribosomal subunit.

The chain is Large ribosomal subunit protein uL30 from Rickettsia peacockii (strain Rustic).